The primary structure comprises 107 residues: Nucleoid-associated protein Pnuc_0701 (107 aa).

The protein belongs to the YbaB/EbfC family. Homodimer.

Its subcellular location is the cytoplasm. It localises to the nucleoid. Its function is as follows. Binds to DNA and alters its conformation. May be involved in regulation of gene expression, nucleoid organization and DNA protection. The polypeptide is Nucleoid-associated protein Pnuc_0701 (Polynucleobacter asymbioticus (strain DSM 18221 / CIP 109841 / QLW-P1DMWA-1) (Polynucleobacter necessarius subsp. asymbioticus)).